We begin with the raw amino-acid sequence, 1046 residues long: Suppressor of Mek1 (1046 aa).

Positions 1-101 (MEPLRKRVKV…QDIWENILQY (101 aa)) constitute a WH1 domain. A disordered region spans residues 626–1046 (FESPETSCNN…SSPTPSELHV (421 aa)). Acidic residues predominate over residues 665 to 689 (IDEEEEEAYFNRDDDSEDSDDEDEL). Over residues 695-713 (NNNNNNNNNNKQICTNNEN) the composition is skewed to low complexity. A compositionally biased stretch (basic and acidic residues) spans 714 to 727 (NMEKNDDNIEKDNE). Acidic residues predominate over residues 743–752 (YEDEDDEDDE). Basic and acidic residues predominate over residues 753-783 (INKSVESDDIVEKHEIIDKNEKKDEIMKENN). Positions 784–803 (DSDNDDNDNNDNDNDNDNNS) are enriched in acidic residues. Positions 804 to 820 (DIENKNHLNNNGNNENN) are enriched in low complexity. Composition is skewed to basic and acidic residues over residues 826–855 (VQDK…KENL) and 862–876 (EKVK…KKEN). A compositionally biased stretch (low complexity) spans 889–905 (SNNSNNNNNNNNNNSNN). Over residues 909–935 (GDNRKTTPKRKLDYEKNESVVSKKIDK) the composition is skewed to basic and acidic residues. A compositionally biased stretch (low complexity) spans 958 to 995 (NNNNSNNNNNNNNNNNNNNNNNNNNNNNNNNNNNNNQN). The segment covering 996–1011 (DENELSSASEEEEEQL) has biased composition (acidic residues). The Nuclear localization signal signature appears at 1003-1022 (ASEEEEEQLENGKHIKKFKR). A compositionally biased stretch (low complexity) spans 1028 to 1038 (NNSSNNSNNSS).

This sequence belongs to the SMEK family. As to quaternary structure, interacts with ppp4c.

It localises to the cytoplasm. The protein resides in the cell cortex. Its subcellular location is the nucleus. Functionally, suppresses MEK1 null cell polarity, chemotaxis, and gene expression defects. Required for proper cytokinesis during vegetative growth, timely exit from the mound stage during development, and myosin II assembly. May be a regulatory subunit of serine/threonine-protein phosphatase 4 (PP4) and may control localization of PP4 to the nucleus. Involved in the regulation of some ppp4c functions, such as developmental progression, chemotaxis, expression of stress response genes and cell movement. The sequence is that of Suppressor of Mek1 (smkA) from Dictyostelium discoideum (Social amoeba).